A 59-amino-acid polypeptide reads, in one-letter code: Large ribosomal subunit protein uL30 (59 aa).

This sequence belongs to the universal ribosomal protein uL30 family. As to quaternary structure, part of the 50S ribosomal subunit.

This is Large ribosomal subunit protein uL30 from Ruminiclostridium cellulolyticum (strain ATCC 35319 / DSM 5812 / JCM 6584 / H10) (Clostridium cellulolyticum).